Here is a 220-residue protein sequence, read N- to C-terminus: MMKCLFLLCLCLLPIVVFSSTFTSQNLIDLPSESPLPKPVLDTNGKELNPNSSYRIISIGRGALGGDVYLGKSPNSDGPCPDGVFRYNSDVGPSGTFVRFIPLSGGIFEDQLLNIQFNIATVKLCVSYTIWKVGNLNAYFRTMLLETGGTIGQADSSYFKIVKLSNFGYNLLYCPITPPFLCPFCRDDNFCAKVGVVIQNGKRRLALVNENPLDVLFQEV.

Positions 1-23 are cleaved as a signal peptide; the sequence is MMKCLFLLCLCLLPIVVFSSTFT. The propeptide occupies 24–32; that stretch reads SQNLIDLPS. Residues 26 to 31 carry the Vacuolar targeting signal motif; the sequence is NLIDLP. The N-linked (GlcNAc...) asparagine glycan is linked to asparagine 51. Cystine bridges form between cysteine 80-cysteine 125 and cysteine 174-cysteine 185.

It belongs to the protease inhibitor I3 (leguminous Kunitz-type inhibitor) family. Tubers.

It localises to the vacuole. Functionally, inhibitor of cathepsin D (aspartic protease). May also inhibit trypsin and chymotrypsin (serine proteases). Protects the plant by inhibiting proteases of invading organisms. This Solanum tuberosum (Potato) protein is Aspartic protease inhibitor 2.